The chain runs to 273 residues: Glutamate racemase (273 aa).

Substrate-binding positions include 17-18 (DS) and 49-50 (YG). C80 functions as the Proton donor/acceptor in the catalytic mechanism. 81–82 (NT) contributes to the substrate binding site. The Proton donor/acceptor role is filled by C190. Residue 191–192 (TH) participates in substrate binding.

This sequence belongs to the aspartate/glutamate racemases family.

It catalyses the reaction L-glutamate = D-glutamate. It functions in the pathway cell wall biogenesis; peptidoglycan biosynthesis. Its function is as follows. Provides the (R)-glutamate required for cell wall biosynthesis. The sequence is that of Glutamate racemase from Corynebacterium glutamicum (strain ATCC 13032 / DSM 20300 / JCM 1318 / BCRC 11384 / CCUG 27702 / LMG 3730 / NBRC 12168 / NCIMB 10025 / NRRL B-2784 / 534).